Reading from the N-terminus, the 207-residue chain is LexA repressor (207 aa).

A DNA-binding region (H-T-H motif) is located at residues 28 to 48 (VREIAVAVGLASSSTVHGHLE). Catalysis depends on for autocatalytic cleavage activity residues Ser-129 and Lys-167.

The protein belongs to the peptidase S24 family. As to quaternary structure, homodimer.

It catalyses the reaction Hydrolysis of Ala-|-Gly bond in repressor LexA.. Functionally, represses a number of genes involved in the response to DNA damage (SOS response), including recA and lexA. In the presence of single-stranded DNA, RecA interacts with LexA causing an autocatalytic cleavage which disrupts the DNA-binding part of LexA, leading to derepression of the SOS regulon and eventually DNA repair. In Oceanobacillus iheyensis (strain DSM 14371 / CIP 107618 / JCM 11309 / KCTC 3954 / HTE831), this protein is LexA repressor.